Consider the following 448-residue polypeptide: MILNDDVKLIPGSKVEAVIKISKEFVKGKYNEILQDYSSRLKIKGFRIGKVPFSIIEGKYSDNIRALTIEKLIHKSLEEFFKSATYKPLGYAVPKILDEKLEIDFNKDFEFTVVYEAYPEFEIPDISNVEVEIPEVTVSDSDVEDELKLLQLENAMVVDDSGDVKVGSIVRVDFVELDDSLSEILTTKRQDFVFTVGESNNYYGFDNDIIGMKKDEEKIIEKNYSADYKFSELANSFKRLKIIIKDIKKRDIPELDDDFAKDIKDSFNTLEELKAHIRENMLRLVKEKRESLKLSKLLSDVSEKLNIEIPSAMFEAELKNVVNEFSTQNKIDLKKLNDSSMGLEGVSDVFKENVLKKLKSKLVFQKIVDNDLTEITDADLEDELVKQAEDTKMRLSEIKKFYQEKNLLGILKDEIKRQKVKDKILKNVKEIKLKEIAFRDFINYKTGE.

The 87-residue stretch at 167–253 folds into the PPIase FKBP-type domain; that stretch reads GSIVRVDFVE…IKDIKKRDIP (87 aa).

The protein belongs to the FKBP-type PPIase family. Tig subfamily.

It is found in the cytoplasm. It carries out the reaction [protein]-peptidylproline (omega=180) = [protein]-peptidylproline (omega=0). Involved in protein export. Acts as a chaperone by maintaining the newly synthesized protein in an open conformation. Functions as a peptidyl-prolyl cis-trans isomerase. The protein is Trigger factor of Borrelia hermsii (strain HS1 / DAH).